A 638-amino-acid polypeptide reads, in one-letter code: Guanylate-binding protein 7 (638 aa).

Positions 1–310 are GTPase domain (Globular); that stretch reads MASEIHMPGP…DAINSGATPC (310 aa). The region spanning 35–277 is the GB1/RHD3-type G domain; sequence TQPVVVVAIV…FCSYIFTHAK (243 aa). Residues 45 to 52, 67 to 69, and 97 to 101 contribute to the GTP site; these read GLYRTGKS, LGC, and DTEGL. The tract at residues 311-638 is interaction with the CYBA-CYBB complex; sequence LENAMAVLAQ…LRNPGKKIIS (328 aa). Positions 590–638 are C-terminal tail; required for its localization to cytoplasmic vesicle; the sequence is PSVFSQILDVAGSIFIAALPGAAKLVDLGMKILSSLCNRLRNPGKKIIS.

The protein belongs to the TRAFAC class dynamin-like GTPase superfamily. GB1/RHD3 GTPase family. GB1 subfamily. Monomer and dimer. Interacts with CYBA, CYBA-CYBB complex and ATG4B. Interacts (via GB1/RHD3-type G domain) with NCF2 and NCF2-NCF4 complex.

It localises to the cytoplasmic vesicle membrane. It catalyses the reaction GTP + H2O = GDP + phosphate + H(+). The enzyme catalyses GDP + H2O = GMP + phosphate + H(+). Its function is as follows. Interferon (IFN)-inducible GTPase that plays important roles in innate immunity against a diverse range of bacterial, viral and protozoan pathogens. Hydrolyzes GTP to GMP in two consecutive cleavage reactions and predominantly uses GTP and not GDP or GMP as the substrate. Following infection, recruited to the pathogen-containing vacuoles or vacuole-escaped bacteria and acts as a positive regulator of inflammasome assembly by promoting the release of inflammasome ligands from bacteria. Acts by promoting lysis of pathogen-containing vacuoles, releasing pathogens into the cytosol. Following pathogen release in the cytosol, promotes recruitment of proteins that mediate bacterial cytolysis: this liberates ligands that are detected by inflammasomes, such as lipopolysaccharide (LPS) that activates the non-canonical CASP4/CASP11 inflammasome or double-stranded DNA (dsDNA) that activates the AIM2 inflammasome. Also promotes IFN-gamma-mediated host defense against bacterial infections by regulating oxidative responses and bacteriolytic peptide generation. May help to assemble NADPH oxidase on phagosomal membranes by acting as a bridging protein between NADPH oxidase cytosolic subunits NCF2-NCF4 and the membrane subunits CYBA-CYBB. Participates along with GBP1 in trafficking monoubiquinated protein cargo to autolysosomes for generating ubiquitin-derived antimicrobial peptides. Facilitates influenza A virus replication by inhibiting the activation of NF-kappaB and JAK-STAT signaling pathways and the expression of type I, type III interferons and pro-inflammatory cytokines. Confers protection to several pathogens, including the bacterial pathogens Listeria monocytogenes and Mycobacterium bovis BCG as well as the protozoan pathogen Toxoplasma gondii. Required for disruption of the parasitophorous vacuole formed following T.gondii infection and subsequent killing of the parasite. The chain is Guanylate-binding protein 7 (GBP7) from Homo sapiens (Human).